We begin with the raw amino-acid sequence, 177 residues long: Transcriptional repressor NrdR (177 aa).

Residues 3-34 (CPYCGGSETQVKDSRPSEDGAAIRRRRVCPDC) fold into a zinc finger. An ATP-cone domain is found at 49-139 (VVVLKRSGKR…VYKNFREARD (91 aa)). The interval 148–177 (SDGMPVPAAAPEAEGDPEPEASGRRRAGRP) is disordered.

Belongs to the NrdR family. Zn(2+) is required as a cofactor.

Negatively regulates transcription of bacterial ribonucleotide reductase nrd genes and operons by binding to NrdR-boxes. This Methylobacterium radiotolerans (strain ATCC 27329 / DSM 1819 / JCM 2831 / NBRC 15690 / NCIMB 10815 / 0-1) protein is Transcriptional repressor NrdR.